Reading from the N-terminus, the 101-residue chain is uncharacterized protein (101 aa).

2 helical membrane-spanning segments follow: residues 35-55 (LWTMNGLIWAYWMMVLQLIII) and 66-86 (FLFFFSHLLLVPFFFFLTLLF).

The protein resides in the membrane. This is an uncharacterized protein from Saccharomyces cerevisiae (strain ATCC 204508 / S288c) (Baker's yeast).